A 270-amino-acid polypeptide reads, in one-letter code: Putative pyruvate, phosphate dikinase regulatory protein (270 aa).

150–157 (GPSRTSKS) contributes to the ADP binding site.

This sequence belongs to the pyruvate, phosphate/water dikinase regulatory protein family. PDRP subfamily.

The enzyme catalyses N(tele)-phospho-L-histidyl/L-threonyl-[pyruvate, phosphate dikinase] + ADP = N(tele)-phospho-L-histidyl/O-phospho-L-threonyl-[pyruvate, phosphate dikinase] + AMP + H(+). The catalysed reaction is N(tele)-phospho-L-histidyl/O-phospho-L-threonyl-[pyruvate, phosphate dikinase] + phosphate + H(+) = N(tele)-phospho-L-histidyl/L-threonyl-[pyruvate, phosphate dikinase] + diphosphate. Its function is as follows. Bifunctional serine/threonine kinase and phosphorylase involved in the regulation of the pyruvate, phosphate dikinase (PPDK) by catalyzing its phosphorylation/dephosphorylation. This chain is Putative pyruvate, phosphate dikinase regulatory protein, found in Neorickettsia sennetsu (strain ATCC VR-367 / Miyayama) (Ehrlichia sennetsu).